We begin with the raw amino-acid sequence, 1307 residues long: CRISPR-associated endonuclease Cas12a (1307 aa).

Positions 1–35 are WED-I (OBD-I); that stretch reads MTQFEGFTNLYQVSKTLRFELIPQGKTLKHIQEQG. The interval 36-320 is REC1 (helical-I); it reads FIEEDKARND…SDRNTLSFIL (285 aa). 47–51 lines the crRNA pocket; sequence YKELK. Residues 74–106 adopt a coiled-coil conformation; that stretch reads ENLSAAIDSYRKEKTEETRNALIEEQATYRNAI. Residues 175–176 and 307–310 contribute to the crRNA site; these read NR and KQIL. The WED-II (helical-II) stretch occupies residues 321-526; the sequence is EEFKSDEEVI…ARNYATKKPY (206 aa). Residues 527–598 form a WED-II (OBD-I) region; it reads SVEKFKLNFQ…GFDKMYYDYF (72 aa). The PAM-binding on target DNA DNA-binding region spans 599-607; the sequence is PDAAKMIPK. Positions 599-718 are PI (LHD); sequence PDAAKMIPKC…EYYAELNPLL (120 aa). The segment at 719 to 884 is WED-III (OBD-III); that stretch reads YHISFQRIAE…ITLNYQAANS (166 aa). 752–761 serves as a coordination point for crRNA; that stretch reads KGHHGKPNLH. Positions 780–783 form a DNA-binding region, target DNA; it reads KLNG. The For pre-crRNA processing role is filled by H800. 806–808 contributes to the crRNA binding site; it reads MLN. Catalysis depends on for pre-crRNA processing residues K809 and K860. Positions 885-940 are ruvC-I; the sequence is PSKFNQRVNAYLKEHPETPIIGIDRGERNLIYITVIDSTGKILEQRSLNTIQQFDY. The active-site For DNase activity of RuvC domain is the D908. The segment at 941 to 957 is bridge helix; that stretch reads QKKLDNREKERVAARQA. Residues 951–968 constitute a DNA-binding region (target DNA); sequence RVAARQAWSVVGTIKDLK. Residues 958 to 1066 form a ruvC-II region; the sequence is WSVVGTIKDL…TQSGFLFYVP (109 aa). The For DNase activity of RuvC domain role is filled by E993. Residues 1051–1053 constitute a DNA-binding region (target DNA); sequence SFA. Residues 1067–1262 are nuclease domain; the sequence is APYTSKIDPL…FQNPEWPMDA (196 aa). The For DNase activity of nuclease domain role is filled by R1226. The For DNase activity of RuvC domain role is filled by D1263. The ruvC-III stretch occupies residues 1263-1307; that stretch reads DANGAYHIALKGQLLLNHLKESKDLKLQNGISNQDWLAYIQELRN.

The protein belongs to the CRISPR-associated endonuclease Cas12a family. As to quaternary structure, monomer. The cofactor is Mg(2+).

The enzyme catalyses Endonucleolytic cleavage to 5'-phosphodinucleotide and 5'-phosphooligonucleotide end-products.. The catalysed reaction is RNA = a 5'-hydroxy-ribonucleotide + n nucleoside-2',3'-cyclophosphates.. CRISPR (clustered regularly interspaced short palindromic repeat), is an adaptive immune system that provides protection against mobile genetic elements (viruses, transposable elements and conjugative plasmids). CRISPR clusters contain sequences complementary to antecedent mobile elements and target invading nucleic acids. CRISPR clusters are transcribed and processed into CRISPR RNA (crRNA). Recognizes a short motif in the CRISPR repeat sequences (the 5' PAM or protospacer adjacent motif, TTTN in this organism) to help distinguish self versus nonself, as targets within the bacterial CRISPR locus do not have PAMs. Has dsDNA endonuclease activity, results in staggered 4-base 5' overhangs 19 and 22 bases downstream of the PAM on the non-targeted and targeted strand respectively. Non-target strand cleavage by the RuvC domain is probably a prerequisite of target strand cleavage by the Nuc domain. Protects E.coli against plasmids and bacteriophage M13mp18, phage T4 with hydroxymethyl or unmodified (but not glycosylated) cytosines and to a lesser extent against lambda and VpaE1 phage. In this CRISPR system correct processing of pre-crRNA requires only this protein and the CRISPR locus. The sequence is that of CRISPR-associated endonuclease Cas12a from Acidaminococcus sp. (strain BV3L6).